A 228-amino-acid chain; its full sequence is Cytidylate kinase (228 aa).

10–18 contacts ATP; it reads GPSGSGKGT.

This sequence belongs to the cytidylate kinase family. Type 1 subfamily.

The protein resides in the cytoplasm. The catalysed reaction is CMP + ATP = CDP + ADP. It carries out the reaction dCMP + ATP = dCDP + ADP. The sequence is that of Cytidylate kinase from Acinetobacter baumannii (strain ACICU).